The primary structure comprises 95 residues: Co-chaperonin GroES (95 aa).

The protein belongs to the GroES chaperonin family. Heptamer of 7 subunits arranged in a ring. Interacts with the chaperonin GroEL.

It localises to the cytoplasm. Functionally, together with the chaperonin GroEL, plays an essential role in assisting protein folding. The GroEL-GroES system forms a nano-cage that allows encapsulation of the non-native substrate proteins and provides a physical environment optimized to promote and accelerate protein folding. GroES binds to the apical surface of the GroEL ring, thereby capping the opening of the GroEL channel. The protein is Co-chaperonin GroES of Clostridium acetobutylicum (strain ATCC 824 / DSM 792 / JCM 1419 / IAM 19013 / LMG 5710 / NBRC 13948 / NRRL B-527 / VKM B-1787 / 2291 / W).